Here is a 153-residue protein sequence, read N- to C-terminus: Deoxyuridine 5'-triphosphate nucleotidohydrolase (153 aa).

Substrate is bound by residues 71 to 73 (RSG), asparagine 84, 88 to 90 (TID), and lysine 98.

This sequence belongs to the dUTPase family. Mg(2+) is required as a cofactor.

It catalyses the reaction dUTP + H2O = dUMP + diphosphate + H(+). The protein operates within pyrimidine metabolism; dUMP biosynthesis; dUMP from dCTP (dUTP route): step 2/2. Functionally, this enzyme is involved in nucleotide metabolism: it produces dUMP, the immediate precursor of thymidine nucleotides and it decreases the intracellular concentration of dUTP so that uracil cannot be incorporated into DNA. The chain is Deoxyuridine 5'-triphosphate nucleotidohydrolase from Wolbachia pipientis subsp. Culex pipiens (strain wPip).